Consider the following 117-residue polypeptide: Holo-[acyl-carrier-protein] synthase (117 aa).

The Mg(2+) site is built by Asp-8 and Glu-58.

The protein belongs to the P-Pant transferase superfamily. AcpS family. Requires Mg(2+) as cofactor.

It localises to the cytoplasm. The catalysed reaction is apo-[ACP] + CoA = holo-[ACP] + adenosine 3',5'-bisphosphate + H(+). Its function is as follows. Transfers the 4'-phosphopantetheine moiety from coenzyme A to a Ser of acyl-carrier-protein. This is Holo-[acyl-carrier-protein] synthase from Staphylococcus epidermidis (strain ATCC 35984 / DSM 28319 / BCRC 17069 / CCUG 31568 / BM 3577 / RP62A).